The following is a 1086-amino-acid chain: MLRTSCTSSLRRVVGKYVVSPLVASQIRFATSSVRSQPYLLNSELTELPAQFKRYSSILLTEKPEGDVPESGPEPSGESGISEKSNVENDKHDGNDEIKPEAEKNEKDEIEKPEIDKDAIVETDGVSESSVENVSGSSSAAGGASAPPSGNSNNNNNNNNNNNDNDEPNEIVTNAGTGLYPPLLAIPMKDRPPLPGRPFAINITDPEVIRSIYTIIDKREPYFVLFHVKDPNEGDTDVINSKDSVYNIGVHCQIIRHTTPRPGVFNVLGYPLERCSLADLSTPSEKKGETETRKEGENFPTSYLKGLKVSYATVKPVKDEPFDKTSTDIKSLVESLKALLSKMGAKNPLEKLQIKEGTELVNDPPRFADFVGSTIHGDPKKIQEILESLNIQTRLSKALELLKVELKASLIKENTIHNLSTKADEYQTRLFIKEFIKELQKRAGIVESDDKKTSKFDERLKHLKMTEEALEAYNAEKAKMESQNEHSSELGVSERYLDWLTSIPWGIYSKDRFNIKQAREILDRDHYGLKDVKDRILEFISMGRVSGKVDGKILCLTGPPGTGKTSIAKSIAESLNRKYVRIAMGGIQDVHEVKGHRRTYVGSIPGRIISALKQAKTSNPLMLIDEIDKLDLSRSGGASSAFLEILDPEQNNAFVDNYIDVKVDLSKVLFVCTANYLGNISPPLRDRMEIIEVNGYTNNEKIEIAKRHLIPDAAKKAGLEGGHVVIETKTISRLIEKYCRESGLRNIKKLITRIFSKASLKIVEEVEAREGESKSKSEEAKSEAITGSVTEISVEDATVKAQSIEEPSVESASQKVDEAKPVESEELKSDEEEEEVVKLEIPDDIKLEITSANLKDYVGPEIYTRDRVYDIPPPGVATGLSYSTSGNGDALYIESILTHSIGSGSGHASIHVTGSLKDVMKESASIAYSFAKSYMVKNYPENRFFEAAEIHVHCPDGAIPKDGPSAGISFTSSLISLALQKPLPPTIAMTGEITVTGRVLAVGGLREKILGAKRYGCNTIIFPKDIENELEEIPEEVKEGVKFIPVEWYQDVFDEIFPNLSSDEGNEVWKEEFNKLDKKKASNKKK.

The N-terminal 55 residues, 1 to 55, are a transit peptide targeting the mitochondrion; that stretch reads MLRTSCTSSLRRVVGKYVVSPLVASQIRFATSSVRSQPYLLNSELTELPAQFKRY. The interval 61-176 is disordered; that stretch reads TEKPEGDVPE…EPNEIVTNAG (116 aa). Residues 69–83 are compositionally biased toward low complexity; sequence PESGPEPSGESGISE. A compositionally biased stretch (basic and acidic residues) spans 85–120; the sequence is SNVENDKHDGNDEIKPEAEKNEKDEIEKPEIDKDAI. Low complexity predominate over residues 124-163; that stretch reads DGVSESSVENVSGSSSAAGGASAPPSGNSNNNNNNNNNNN. The Lon N-terminal domain maps to 183–406; sequence LLAIPMKDRP…KALELLKVEL (224 aa). 558 to 565 contributes to the ATP binding site; the sequence is GPPGTGKT. Composition is skewed to basic and acidic residues over residues 767 to 782 and 815 to 827; these read EARE…EAKS and KVDE…SEEL. 2 disordered regions span residues 767–788 and 800–835; these read EARE…ITGS and KAQS…EEEE. A Lon proteolytic domain is found at 871 to 1059; it reads IPPPGVATGL…QDVFDEIFPN (189 aa). Residues Ser-965 and Lys-1008 contribute to the active site.

This sequence belongs to the peptidase S16 family. Homohexamer or homoheptamer. Organized in a ring with a central cavity.

The protein localises to the mitochondrion matrix. It carries out the reaction Hydrolysis of proteins in presence of ATP.. Its function is as follows. ATP-dependent serine protease that mediates the selective degradation of misfolded, unassembled or oxidatively damaged polypeptides as well as certain short-lived regulatory proteins in the mitochondrial matrix. May also have a chaperone function in the assembly of inner membrane protein complexes. Participates in the regulation of mitochondrial gene expression and in the maintenance of the integrity of the mitochondrial genome. Binds to mitochondrial DNA in a site-specific manner. The polypeptide is Lon protease homolog, mitochondrial (Scheffersomyces stipitis (strain ATCC 58785 / CBS 6054 / NBRC 10063 / NRRL Y-11545) (Yeast)).